A 120-amino-acid chain; its full sequence is Probable non-functional immunoglobulin kappa variable 2D-24 (120 aa).

The signal sequence occupies residues 1 to 19 (MRLLAQLLGLLMLWVPGSS). The 101-residue stretch at 20-120 (GDIVMTQTPL…YYCTQATQFP (101 aa)) folds into the Ig-like domain. The interval 21–43 (DIVMTQTPLSSPVTLGQPASISF) is framework-1. The segment at 44-59 (RSSQSLVHSDGNTYLS) is complementarity-determining-1. Residues 60–74 (WLQQRPGQPPRLLIY) are framework-2. The interval 75-81 (KVSNRFS) is complementarity-determining-2. The framework-3 stretch occupies residues 82–113 (GVPDRFSGSGAGTDFTLKISRVEAEDVGVYYC). The complementarity-determining-3 stretch occupies residues 114 to 120 (TQATQFP).

Most probably, the immunoglobulin is not assembled due to incorrect folding of light chain. Immunoglobulins are composed of two identical heavy chains and two identical light chains; disulfide-linked.

The protein localises to the secreted. It localises to the cell membrane. Probable non-functional open reading frame (ORF) of V region of the variable domain of immunoglobulin light chains. Non-functional ORF generally cannot participate in the synthesis of a productive immunoglobulin chain due to altered V-(D)-J or switch recombination and/or splicing site (at mRNA level) and/or conserved amino acid change (protein level). Immunoglobulins, also known as antibodies, are membrane-bound or secreted glycoproteins produced by B lymphocytes. In the recognition phase of humoral immunity, the membrane-bound immunoglobulins serve as receptors which, upon binding of a specific antigen, trigger the clonal expansion and differentiation of B lymphocytes into immunoglobulins-secreting plasma cells. Secreted immunoglobulins mediate the effector phase of humoral immunity, which results in the elimination of bound antigens. The antigen binding site is formed by the variable domain of one heavy chain, together with that of its associated light chain. Thus, each immunoglobulin has two antigen binding sites with remarkable affinity for a particular antigen. The variable domains are assembled by a process called V-(D)-J rearrangement and can then be subjected to somatic hypermutations which, after exposure to antigen and selection, allow affinity maturation for a particular antigen. The protein is Probable non-functional immunoglobulin kappa variable 2D-24 of Homo sapiens (Human).